The sequence spans 716 residues: Polyribonucleotide nucleotidyltransferase (716 aa).

Positions 490 and 496 each coordinate Mg(2+). A KH domain is found at 556–615 (PKIETLTIPTDKIREVIGSGGKVIREIVETSGAKVDINDDGVIKIASNDQAAIKKAYDMI). An S1 motif domain is found at 625–693 (GQIYTGKVVK…ERGKVRLGMK (69 aa)). Residues 695–716 (VDQETGQEIQPEKKEKEEAGEA) form a disordered region. A compositionally biased stretch (basic and acidic residues) spans 704–716 (QPEKKEKEEAGEA).

The protein belongs to the polyribonucleotide nucleotidyltransferase family. Requires Mg(2+) as cofactor.

It localises to the cytoplasm. The catalysed reaction is RNA(n+1) + phosphate = RNA(n) + a ribonucleoside 5'-diphosphate. Its function is as follows. Involved in mRNA degradation. Catalyzes the phosphorolysis of single-stranded polyribonucleotides processively in the 3'- to 5'-direction. The sequence is that of Polyribonucleotide nucleotidyltransferase from Cereibacter sphaeroides (strain ATCC 17029 / ATH 2.4.9) (Rhodobacter sphaeroides).